The following is a 461-amino-acid chain: Probable protein phosphatase 2C 40 (461 aa).

The interval 34-63 is disordered; the sequence is REASAERASASASAGAGGRERERRPSVAAG. One can recognise a PPM-type phosphatase domain in the interval 57 to 321; sequence RPSVAAGQAC…DDTTCIVIDI (265 aa). The Mn(2+) site is built by aspartate 98, glycine 99, aspartate 273, and aspartate 312. Over residues 439 to 453 the composition is skewed to basic and acidic residues; that stretch reads KKEAMEGKRHSRDSS. Positions 439–461 are disordered; that stretch reads KKEAMEGKRHSRDSSSRNSGSSE.

Belongs to the PP2C family. It depends on Mg(2+) as a cofactor. The cofactor is Mn(2+). In terms of tissue distribution, expressed in leaves, leaf sheaths, panicles, nodes and internodes. Expressed at low levels in roots and stems.

The protein resides in the nucleus. Its subcellular location is the cytoplasm. It carries out the reaction O-phospho-L-seryl-[protein] + H2O = L-seryl-[protein] + phosphate. The catalysed reaction is O-phospho-L-threonyl-[protein] + H2O = L-threonyl-[protein] + phosphate. Its function is as follows. Mediates the negative regulation of osmotic and salt stress tolerance through regulation of the jasmonate and abscisic acid signaling pathways and modulation of the raffinose family oligosaccharide metabolism pathway. The protein is Probable protein phosphatase 2C 40 of Oryza sativa subsp. japonica (Rice).